The chain runs to 129 residues: NHP2-like protein 1 homolog (129 aa).

This sequence belongs to the eukaryotic ribosomal protein eL8 family.

Its subcellular location is the nucleus. It localises to the nucleolus. Its function is as follows. Binds to the 5'-stem-loop of U4 snRNA and may play a role in the late stage of spliceosome assembly. The protein undergoes a conformational change upon RNA-binding. The sequence is that of NHP2-like protein 1 homolog from Dictyostelium discoideum (Social amoeba).